The chain runs to 372 residues: NAD(P)H-quinone oxidoreductase subunit 1 (372 aa).

Transmembrane regions (helical) follow at residues 27-47 (AIWM…GVLV), 97-117 (WLFL…YLIV), 130-150 (VGIF…LMAG), 176-196 (LALS…IDIV), 204-224 (ILGW…IAAL), 254-274 (FALF…VFAV), 308-328 (SLGI…AILL), and 351-371 (VSLV…FAFG).

This sequence belongs to the complex I subunit 1 family. As to quaternary structure, NDH-1 is composed of at least 11 different subunits.

It localises to the cellular thylakoid membrane. It catalyses the reaction a plastoquinone + NADH + (n+1) H(+)(in) = a plastoquinol + NAD(+) + n H(+)(out). The catalysed reaction is a plastoquinone + NADPH + (n+1) H(+)(in) = a plastoquinol + NADP(+) + n H(+)(out). Its function is as follows. NDH-1 shuttles electrons from an unknown electron donor, via FMN and iron-sulfur (Fe-S) centers, to quinones in the respiratory and/or the photosynthetic chain. The immediate electron acceptor for the enzyme in this species is believed to be plastoquinone. Couples the redox reaction to proton translocation, and thus conserves the redox energy in a proton gradient. The chain is NAD(P)H-quinone oxidoreductase subunit 1 from Microcystis aeruginosa (strain NIES-843 / IAM M-2473).